The chain runs to 207 residues: Dephospho-CoA kinase (207 aa).

The DPCK domain maps to 10-207 (ILGLTGGIGS…FYLTLRGGQS (198 aa)). 18–23 (GSGKSA) is a binding site for ATP.

The protein belongs to the CoaE family.

Its subcellular location is the cytoplasm. The catalysed reaction is 3'-dephospho-CoA + ATP = ADP + CoA + H(+). Its pathway is cofactor biosynthesis; coenzyme A biosynthesis; CoA from (R)-pantothenate: step 5/5. Functionally, catalyzes the phosphorylation of the 3'-hydroxyl group of dephosphocoenzyme A to form coenzyme A. The chain is Dephospho-CoA kinase from Pseudomonas savastanoi pv. phaseolicola (strain 1448A / Race 6) (Pseudomonas syringae pv. phaseolicola (strain 1448A / Race 6)).